The sequence spans 159 residues: MADTVLFEFLHTEMVAELWAHDPDPGPGGQKMSLSVLEGMGFRVGQALGERLPRETLAFREELDVLKFLCKDLWVAVFQKQMDSLRTNHQGTYVLQDNSFPLLLPMASGLQYLEEAPKFLAFTCGLLRGALYTLGIESVVTASVAALPVCKFQVVIPKS.

Position 33 is a phosphoserine (Ser33).

This sequence belongs to the TRAPP small subunits family. BET3 subfamily. In terms of assembly, part of the multisubunit transport protein particle (TRAPP) complex. Heterodimer with TRAPPC3. The heterodimer TRAPPC3-TRAPPC6A interacts with TRAPPC2L. Interacts with TRAPPC2L.

It is found in the golgi apparatus. Its subcellular location is the cis-Golgi network. The protein localises to the endoplasmic reticulum. May play a role in vesicular transport during the biogenesis of melanosomes. This chain is Trafficking protein particle complex subunit 6A, found in Homo sapiens (Human).